Consider the following 215-residue polypeptide: S-crystallin 2 (215 aa).

The GST N-terminal domain occupies 2–80 (PSYTLNYFNH…YLAREFGFHG (79 aa)). A GST C-terminal domain is found at 82–215 (NNMEMARVEY…YLKKRSSTEF (134 aa)).

This sequence belongs to the GST superfamily. Lens.

In terms of biological role, S-crystallins are structural components of squids and octopi eye lens. Contains relatively little if any GST activity. This chain is S-crystallin 2, found in Enteroctopus dofleini (North Pacific giant octopus).